Here is an 89-residue protein sequence, read N- to C-terminus: MAEHVVYVGNKPVMNYVLATLTQLNEGADEVVIKARGRAISRAVDVAEIVRNRFMPGVKVKEIKIDTEELESEQGRRSNVSTIEIVLAK.

The protein belongs to the histone-like Alba family. In terms of assembly, forms homodimers and homotetramers. Interacts with Alba 1.

It localises to the cytoplasm. The protein localises to the chromosome. Binds double-stranded DNA tightly but without sequence specificity. Involved in DNA compaction. In Archaeoglobus fulgidus (strain ATCC 49558 / DSM 4304 / JCM 9628 / NBRC 100126 / VC-16), this protein is DNA/RNA-binding protein Alba 2.